The primary structure comprises 347 residues: Methylthioribose-1-phosphate isomerase (347 aa).

Substrate-binding positions include 47-49 (RGA), Arg90, and Gln199. Catalysis depends on Asp240, which acts as the Proton donor. 250–251 (NK) is a binding site for substrate.

The protein belongs to the eIF-2B alpha/beta/delta subunits family. MtnA subfamily.

It catalyses the reaction 5-(methylsulfanyl)-alpha-D-ribose 1-phosphate = 5-(methylsulfanyl)-D-ribulose 1-phosphate. It participates in amino-acid biosynthesis; L-methionine biosynthesis via salvage pathway; L-methionine from S-methyl-5-thio-alpha-D-ribose 1-phosphate: step 1/6. Its function is as follows. Catalyzes the interconversion of methylthioribose-1-phosphate (MTR-1-P) into methylthioribulose-1-phosphate (MTRu-1-P). The polypeptide is Methylthioribose-1-phosphate isomerase (Natranaerobius thermophilus (strain ATCC BAA-1301 / DSM 18059 / JW/NM-WN-LF)).